Here is a 274-residue protein sequence, read N- to C-terminus: Large ribosomal subunit protein uL2 (274 aa).

2 disordered regions span residues 28-54 (APHA…TRHI) and 224-274 (VAMN…RRRK). The span at 263 to 274 (KRTDKMIVRRRK) shows a compositional bias: basic and acidic residues.

It belongs to the universal ribosomal protein uL2 family. In terms of assembly, part of the 50S ribosomal subunit. Forms a bridge to the 30S subunit in the 70S ribosome.

One of the primary rRNA binding proteins. Required for association of the 30S and 50S subunits to form the 70S ribosome, for tRNA binding and peptide bond formation. It has been suggested to have peptidyltransferase activity; this is somewhat controversial. Makes several contacts with the 16S rRNA in the 70S ribosome. This chain is Large ribosomal subunit protein uL2, found in Pseudomonas savastanoi pv. phaseolicola (strain 1448A / Race 6) (Pseudomonas syringae pv. phaseolicola (strain 1448A / Race 6)).